A 305-amino-acid polypeptide reads, in one-letter code: Tyrosine recombinase XerC (305 aa).

A Core-binding (CB) domain is found at 4–95 (TSIQELIDKW…AVKNFYRFLE (92 aa)). A Tyr recombinase domain is found at 116-298 (LLPKALSEDD…SIKHLEAVYT (183 aa)). Active-site residues include Arg-159, Lys-182, His-250, Arg-253, and His-276. The O-(3'-phospho-DNA)-tyrosine intermediate role is filled by Tyr-285.

It belongs to the 'phage' integrase family. XerC subfamily. In terms of assembly, forms a cyclic heterotetrameric complex composed of two molecules of XerC and two molecules of XerD.

It is found in the cytoplasm. Functionally, site-specific tyrosine recombinase, which acts by catalyzing the cutting and rejoining of the recombining DNA molecules. The XerC-XerD complex is essential to convert dimers of the bacterial chromosome into monomers to permit their segregation at cell division. It also contributes to the segregational stability of plasmids. This Rickettsia felis (strain ATCC VR-1525 / URRWXCal2) (Rickettsia azadi) protein is Tyrosine recombinase XerC.